We begin with the raw amino-acid sequence, 435 residues long: Putative magnesium transporter MRS2-H (435 aa).

A disordered region spans residues 19–54 (FSSSPESRRCRSVHRVPSRPRPPLAPPARVMGKGNS). Helical transmembrane passes span 369–389 (LTLI…AAFA) and 408–428 (FVGA…TYAW).

It belongs to the CorA metal ion transporter (MIT) (TC 1.A.35.5) family.

It is found in the membrane. Functionally, putative magnesium transporter. The protein is Putative magnesium transporter MRS2-H (MRS2-H) of Oryza sativa subsp. indica (Rice).